A 933-amino-acid chain; its full sequence is Bifunctional uridylyltransferase/uridylyl-removing enzyme (933 aa).

Residues 1–390 (MLSTRAASAD…RLAALARRKD (390 aa)) are uridylyltransferase. Positions 391–745 (VDGFVVDGER…TRIDRGRAIT (355 aa)) are uridylyl-removing. Residues 506–628 (VDEHTLFALG…VQSPERLRLL (123 aa)) enclose the HD domain. 2 consecutive ACT domains span residues 746-829 (EVTI…DLTK) and 859-933 (VIEV…DPSA).

It belongs to the GlnD family. It depends on Mg(2+) as a cofactor.

It catalyses the reaction [protein-PII]-L-tyrosine + UTP = [protein-PII]-uridylyl-L-tyrosine + diphosphate. It carries out the reaction [protein-PII]-uridylyl-L-tyrosine + H2O = [protein-PII]-L-tyrosine + UMP + H(+). With respect to regulation, uridylyltransferase (UTase) activity is inhibited by glutamine, while glutamine activates uridylyl-removing (UR) activity. Uridylylation process is dependent on ATP and 2-oxoglutarate, which are effector molecules that likely bind to PII proteins and control their activity. Modifies, by uridylylation and deuridylylation, the PII regulatory proteins GlnB and GlnZ, in response to the nitrogen status of the cell that GlnD senses through the glutamine level. Under low glutamine levels, catalyzes the conversion of the PII proteins and UTP to PII-UMP and PPi, while under higher glutamine levels, GlnD hydrolyzes PII-UMP to PII and UMP (deuridylylation). Thus, controls uridylylation state and activity of the PII proteins, and plays an important role in the regulation of nitrogen fixation and metabolism. This is Bifunctional uridylyltransferase/uridylyl-removing enzyme from Azospirillum brasilense.